The primary structure comprises 262 residues: 3-methyl-2-oxobutanoate hydroxymethyltransferase (262 aa).

Residues Asp-44 and Asp-83 each contribute to the Mg(2+) site. Residues 44-45 (DS), Asp-83, and Lys-112 each bind 3-methyl-2-oxobutanoate. Mg(2+) is bound at residue Glu-114. Catalysis depends on Glu-177, which acts as the Proton acceptor.

It belongs to the PanB family. In terms of assembly, homodecamer; pentamer of dimers. Mg(2+) serves as cofactor.

It is found in the cytoplasm. It catalyses the reaction 3-methyl-2-oxobutanoate + (6R)-5,10-methylene-5,6,7,8-tetrahydrofolate + H2O = 2-dehydropantoate + (6S)-5,6,7,8-tetrahydrofolate. The protein operates within cofactor biosynthesis; coenzyme A biosynthesis. Its function is as follows. Catalyzes the reversible reaction in which hydroxymethyl group from 5,10-methylenetetrahydrofolate is transferred onto alpha-ketoisovalerate to form ketopantoate. In Metallosphaera sedula (strain ATCC 51363 / DSM 5348 / JCM 9185 / NBRC 15509 / TH2), this protein is 3-methyl-2-oxobutanoate hydroxymethyltransferase.